We begin with the raw amino-acid sequence, 247 residues long: Reticulon-like protein B8 (247 aa).

A Reticulon domain is found at 61-247 (SADVLLWRNK…SGKFGLKKRE (187 aa)). Helical transmembrane passes span 71-91 (KISA…EWIN), 92-112 (FHFL…QFVW), and 166-186 (FLMA…CNFL).

Its subcellular location is the endoplasmic reticulum membrane. The chain is Reticulon-like protein B8 (RTNLB8) from Arabidopsis thaliana (Mouse-ear cress).